A 376-amino-acid polypeptide reads, in one-letter code: TelA-like protein SE_1089 (376 aa).

This sequence belongs to the TelA family.

The sequence is that of TelA-like protein SE_1089 from Staphylococcus epidermidis (strain ATCC 12228 / FDA PCI 1200).